A 2273-amino-acid chain; its full sequence is Retinal-specific phospholipid-transporting ATPase ABCA4 (2273 aa).

The Cytoplasmic segment spans residues 1–21 (MGFVRQIQLLLWKNWTLRKRQ). Residues 22–42 (KIRFVVELVWPLSLFLVLIWL) form a helical membrane-spanning segment. The Extracellular portion of the chain corresponds to 43-646 (RNANPLYSHH…MPYPCFVDDS (604 aa)). Intrachain disulfides connect Cys54–Cys81 and Cys75–Cys324. N-linked (GlcNAc...) asparagine glycosylation occurs at Asn98. Mg(2+)-binding residues include Ser336 and Asn338. A disulfide bridge links Cys370 with Cys519. Asn415, Asn444, and Asn504 each carry an N-linked (GlcNAc...) asparagine glycan. 2 residues coordinate an N-all-trans-retinylidenephosphatidylethanolamine: Arg587 and Arg653. Disulfide bonds link Cys641/Cys1490, Cys1444/Cys1455, and Cys1488/Cys1502. A helical transmembrane segment spans residues 647–667 (FMIILNRCFPIFMVLAWIYSV). The Cytoplasmic portion of the chain corresponds to 668 to 699 (SMTVKSIVLEKELRLKETLKNQGVSNAVIWCT). A helical membrane pass occupies residues 700 to 720 (WFLDSFSIMSMSIFLLTIFIM). Residues 721–730 (HGRILHYSDP) are Extracellular-facing. A helical transmembrane segment spans residues 731–751 (FILFLFLLAFSTATIMLCFLL). The Cytoplasmic portion of the chain corresponds to 752–759 (STFFSKAS). A helical membrane pass occupies residues 760 to 780 (LAAACSGVIYFTLYLPHILCF). Over 781 to 835 (AWQDRMTAELKKAVSLLSPVAFGFGTEYLVRFEEQGLGLQWSNIGNSPTEGDEFS) the chain is Extracellular. Residues 836-856 (FLLSMQMMLLDAAVYGLLAWY) form a helical membrane-spanning segment. At 857-1376 (LDQVFPGDYG…IRSHKDFLAQ (520 aa)) the chain is on the cytoplasmic side. The interval 891-911 (ERALEKTEPLTEETEDPEHPE) is disordered. Residue Thr901 is modified to Phosphothreonine. One can recognise an ABC transporter 1 domain in the interval 929–1160 (VCVKNLVKIF…FGTGLYLTLV (232 aa)). Residues Phe938, Gly966, and Lys969 each contribute to the ATP site. Thr970 contacts Mg(2+). Residues Thr971, Gln1010, Lys1054, Gly1064, Gly1065, and His1118 each coordinate ATP. Ser1185 carries the phosphoserine modification. Positions 1284-1345 (PLFAGGAQQK…EPECPGPQLN (62 aa)) are disordered. Phosphothreonine is present on Thr1313. Ser1317 is subject to Phosphoserine. Over residues 1331–1340 (GQPPPEPECP) the composition is skewed to pro residues. A helical membrane pass occupies residues 1377–1397 (IVLPATFVFLALMLSIVIPPF). Residues 1398–1727 (GEYPALTLHP…VSPTTYWVTN (330 aa)) lie on the Extracellular side of the membrane. A glycan (N-linked (GlcNAc...) asparagine) is linked at Asn1469. Residues Asn1529, Asn1588, and Asn1662 are each glycosylated (N-linked (GlcNAc...) asparagine). Residues 1728 to 1748 (FLWDIMNYSVSAGLVVGIFIG) form a helical membrane-spanning segment. Over 1749-1759 (FQKKAYTSPEN) the chain is Cytoplasmic. The helical transmembrane segment at 1760–1780 (LPALVALLLLYGWAVIPMMYP) threads the bilayer. The Extracellular segment spans residues 1781–1792 (ASFLFDVPSTAY). Residues 1793–1813 (VALSCANLFIGINSSAITFIL) traverse the membrane as a helical segment. The Cytoplasmic portion of the chain corresponds to 1814–1831 (ELFENNRTLLRFNAVLRK). The helical transmembrane segment at 1832–1852 (LLIVFPHFCLGRGLIDLALSQ) threads the bilayer. The Extracellular portion of the chain corresponds to 1853–1873 (AVTDVYARFGEEHSANPFHWD). A helical membrane pass occupies residues 1874–1894 (LIGKNLFAMVVEGVVYFLLTL). Residues 1895 to 2273 (LVQRHFFLSQ…AAGASRQAQD (379 aa)) are Cytoplasmic-facing. Residues 1938–2170 (LRLHELTKIY…FGDGYIVTMK (233 aa)) form the ABC transporter 2 domain. Asn1974, Gly1975, Lys1978, Thr1979, Thr1980, and Gly2073 together coordinate ATP. Residue Thr1979 participates in Mg(2+) binding. An essential for ATP binding and ATPase activity region spans residues 2244-2249 (VFVNFA).

This sequence belongs to the ABC transporter superfamily. ABCA family. Post-translationally, proteolytic cleavage by trypsin leads to a 120-kDa N-terminal fragment and a 115-kDa C-terminal fragment that are linked through disulfide bonds. N-glycosylated. In terms of processing, phosphorylation is independent of light exposure and modulates ATPase activity. Retinal-specific. Seems to be exclusively found in the rims of rod photoreceptor cells.

The protein localises to the membrane. Its subcellular location is the endoplasmic reticulum. It is found in the cytoplasmic vesicle. The protein resides in the cell projection. It localises to the cilium. The protein localises to the photoreceptor outer segment. The catalysed reaction is an N-all-trans-retinylidenephosphatidylethanolamine(out) + ATP + H2O = an N-all-trans-retinylidenephosphatidylethanolamine(in) + ADP + phosphate + H(+). It catalyses the reaction ATP + H2O + phospholipidSide 1 = ADP + phosphate + phospholipidSide 2.. The enzyme catalyses a 1,2-diacyl-sn-glycero-3-phosphoethanolamine(out) + ATP + H2O = a 1,2-diacyl-sn-glycero-3-phosphoethanolamine(in) + ADP + phosphate + H(+). It carries out the reaction N-11-cis-retinylidenephosphatidylethanolamine(out) + ATP + H2O = N-11-cis-retinylidenephosphatidylethanolamine(in) + ADP + phosphate + H(+). The catalysed reaction is ATP + H2O = ADP + phosphate + H(+). ATPase activity is decreased by cholesterol and ceramide. Phospholipids translocase activity is highly reduced by berylium fluoride and aluminum floride. N-ethylmaleimide inhibits phospholipid translocase activity. Flippase that catalyzes in an ATP-dependent manner the transport of retinal-phosphatidylethanolamine conjugates like 11-cis and all-trans isomers of N-retinylidene-phosphatidylethanolamine (N-Ret-PE) from the lumen to the cytoplasmic leaflet of photoreceptor outer segment disk membranes, where 11-cis-retinylidene-phosphatidylethanolamine is then isomerized to its all-trans isomer and reduced by RDH8 to produce all-trans-retinol. This transport activity ensures that all-trans-retinal generated from photoexcitation and 11-cis-retinal not needed for the regeneration of rhodopsin and cone opsins are effectively cleared from the photoreceptors, therefore preventing their accumulation and the formation of toxic bisretinoid. Displays ATPase activity in vitro in absence of retinal substrate. May display GTPase activity that is strongly influenced by the lipid environment and the presence of retinoid compounds. Binds the unprotonated form of N-retinylidene-phosphatidylethanolamine with high affinity in the absence of ATP, and ATP binding and hydrolysis induce a protein conformational change that causes N-retinylidene-phosphatidylethanolamine release. The sequence is that of Retinal-specific phospholipid-transporting ATPase ABCA4 from Homo sapiens (Human).